Consider the following 430-residue polypeptide: Tol-Pal system protein TolB (430 aa).

The signal sequence occupies residues 1-21 (MKQAFRVALGFFLLWASVLHA).

The protein belongs to the TolB family. As to quaternary structure, the Tol-Pal system is composed of five core proteins: the inner membrane proteins TolA, TolQ and TolR, the periplasmic protein TolB and the outer membrane protein Pal. They form a network linking the inner and outer membranes and the peptidoglycan layer.

The protein localises to the periplasm. Functionally, part of the Tol-Pal system, which plays a role in outer membrane invagination during cell division and is important for maintaining outer membrane integrity. TolB occupies a key intermediary position in the Tol-Pal system because it communicates directly with both membrane-embedded components, Pal in the outer membrane and TolA in the inner membrane. The chain is Tol-Pal system protein TolB from Sodalis glossinidius (strain morsitans).